Reading from the N-terminus, the 634-residue chain is Kelch-like protein 22 (634 aa).

Ala-2 is modified (N-acetylalanine). The region spanning 50–117 (FDVVLVVEGK…IYTSELELSL (68 aa)) is the BTB domain. Kelch repeat units lie at residues 299–349 (CVVG…VLNN), 350–399 (FVYL…VVGK), 400–446 (YIYA…TLQG), 448–493 (MYIT…ALLD), 495–544 (LFVI…VLDS), and 545–593 (RIYV…VLTL). At Thr-463 the chain carries Phosphothreonine. Position 466 is a phosphotyrosine (Tyr-466). At Thr-475 the chain carries Phosphothreonine. The tract at residues 600–634 (EQPRGTPNRSQADADFASEVMSVSDWEEFDNSSED) is disordered. Residue Thr-605 is modified to Phosphothreonine. Positions 624 to 634 (DWEEFDNSSED) are enriched in acidic residues.

In terms of assembly, component of the BCR(KLHL22) E3 ubiquitin ligase complex, at least composed of CUL3, KLHL22 and RBX1. Interacts with PLK1. Interacts with DEPDC5 (via DEP domain); the interaction depends on amino acid availability. Interacts with YWHAE; required for the nuclear localization of KLHL22 upon amino acid starvation.

It is found in the cytoplasm. It localises to the cytosol. The protein localises to the cytoskeleton. The protein resides in the microtubule organizing center. Its subcellular location is the centrosome. It is found in the spindle. It localises to the nucleus. The protein localises to the lysosome. Its pathway is protein modification; protein ubiquitination. Functionally, substrate-specific adapter of a BCR (BTB-CUL3-RBX1) E3 ubiquitin ligase complex required for chromosome alignment and localization of PLK1 at kinetochores. The BCR(KLHL22) ubiquitin ligase complex mediates monoubiquitination of PLK1, leading to PLK1 dissociation from phosphoreceptor proteins and subsequent removal from kinetochores, allowing silencing of the spindle assembly checkpoint (SAC) and chromosome segregation. Monoubiquitination of PLK1 does not lead to PLK1 degradation. The BCR(KLHL22) ubiquitin ligase complex is also responsible for the amino acid-stimulated 'Lys-48' polyubiquitination and proteasomal degradation of DEPDC5. Through the degradation of DEPDC5, releases the GATOR1 complex-mediated inhibition of the TORC1 pathway. It is therefore an amino acid-dependent activator within the amino acid-sensing branch of the TORC1 pathway, indirectly regulating different cellular processes including cell growth and autophagy. This is Kelch-like protein 22 from Mus musculus (Mouse).